The primary structure comprises 158 residues: NAD(P)H-quinone oxidoreductase subunit J, chloroplastic (158 aa).

It belongs to the complex I 30 kDa subunit family. In terms of assembly, NDH is composed of at least 16 different subunits, 5 of which are encoded in the nucleus.

It localises to the plastid. Its subcellular location is the chloroplast thylakoid membrane. It catalyses the reaction a plastoquinone + NADH + (n+1) H(+)(in) = a plastoquinol + NAD(+) + n H(+)(out). The enzyme catalyses a plastoquinone + NADPH + (n+1) H(+)(in) = a plastoquinol + NADP(+) + n H(+)(out). NDH shuttles electrons from NAD(P)H:plastoquinone, via FMN and iron-sulfur (Fe-S) centers, to quinones in the photosynthetic chain and possibly in a chloroplast respiratory chain. The immediate electron acceptor for the enzyme in this species is believed to be plastoquinone. Couples the redox reaction to proton translocation, and thus conserves the redox energy in a proton gradient. The polypeptide is NAD(P)H-quinone oxidoreductase subunit J, chloroplastic (Morus indica (Mulberry)).